The chain runs to 317 residues: Melanocyte-stimulating hormone receptor (317 aa).

Over 1–37 (MPVQGSQRRLLGSLNSTPTATPRLGLAANQTGARCLE) the chain is Extracellular. Asn-29 is a glycosylation site (N-linked (GlcNAc...) asparagine). A helical transmembrane segment spans residues 38 to 63 (VSIPDGLFLSLGLVSLVENVLVVVAI). The Cytoplasmic segment spans residues 64–72 (ARNRNLHSP). Residues 73-93 (MYCFICCLALSDLLVSGSNML) traverse the membrane as a helical segment. Residues 94-118 (DTAVILLLEAGALAARAAVVQQLDN) are Extracellular-facing. A helical transmembrane segment spans residues 119–140 (VIDVITCSSMLSSLCFLGAIAV). Topologically, residues 141–163 (DRYISIFYALRYHSIVTLRRARR) are cytoplasmic. Residues 164–183 (VVAAIWVASILFSTLFIAYC) form a helical membrane-spanning segment. The Extracellular segment spans residues 184–191 (DHAAVLLC). A helical transmembrane segment spans residues 192–211 (LVVFFLAMLVLMAVLYVHML). Topologically, residues 212–240 (ARACQHAQGIAQLHKRQRPAHQGVGLKGA) are cytoplasmic. The helical transmembrane segment at 241–266 (ATLTILLGIFFLCWGPFFLHLTLIVL) threads the bilayer. Residues 267–279 (CPQHPTCSCIFKN) lie on the Extracellular side of the membrane. Residues 280–300 (FNLFLTLIICNAIIDPLIYAF) traverse the membrane as a helical segment. Topologically, residues 301–317 (RSQELRRTLKKVLLCSW) are cytoplasmic. A lipid anchor (S-palmitoyl cysteine) is attached at Cys-315.

This sequence belongs to the G-protein coupled receptor 1 family. In terms of assembly, interacts with MGRN1, but does not undergo MGRN1-mediated ubiquitination; this interaction competes with GNAS-binding and thus inhibits agonist-induced cAMP production. Interacts with OPN3; the interaction results in a decrease in MC1R-mediated cAMP signaling and ultimately a decrease in melanin production in melanocytes.

It localises to the cell membrane. Functionally, receptor for MSH (alpha, beta and gamma) and ACTH. The activity of this receptor is mediated by G proteins which activate adenylate cyclase. Mediates melanogenesis, the production of eumelanin (black/brown) and phaeomelanin (red/yellow), via regulation of cAMP signaling in melanocytes. This is Melanocyte-stimulating hormone receptor (MC1R) from Trachypithecus francoisi (Francois' leaf monkey).